The chain runs to 278 residues: Biotin synthase (278 aa).

In terms of domain architecture, Radical SAM core spans 1–227; it reads MQIMLCAISN…NAHIMVAGGR (227 aa). Positions 16, 20, and 23 each coordinate [4Fe-4S] cluster. [2Fe-2S] cluster-binding residues include Cys-60, Cys-95, and Cys-153.

This sequence belongs to the radical SAM superfamily. Biotin synthase family. As to quaternary structure, homodimer. [4Fe-4S] cluster serves as cofactor. It depends on [2Fe-2S] cluster as a cofactor.

It carries out the reaction (4R,5S)-dethiobiotin + (sulfur carrier)-SH + 2 reduced [2Fe-2S]-[ferredoxin] + 2 S-adenosyl-L-methionine = (sulfur carrier)-H + biotin + 2 5'-deoxyadenosine + 2 L-methionine + 2 oxidized [2Fe-2S]-[ferredoxin]. The protein operates within cofactor biosynthesis; biotin biosynthesis; biotin from 7,8-diaminononanoate: step 2/2. Its function is as follows. Catalyzes the conversion of dethiobiotin (DTB) to biotin by the insertion of a sulfur atom into dethiobiotin via a radical-based mechanism. In Campylobacter lari (strain RM2100 / D67 / ATCC BAA-1060), this protein is Biotin synthase.